A 159-amino-acid polypeptide reads, in one-letter code: MTRSEKVEIIAKLEEGFKASEAIVVCNYRGLSTKKLEELRNNARENNVKVQIVKNTLANIALNNSGKTGLVLKDTNIYLWGEDQLSVSKVAAKFEENNDKFEIKTAYIEGEVADVAKVKALAKMPSRNELLAMLLQVWNAPITNFTIGLNALKNKKESE.

This sequence belongs to the universal ribosomal protein uL10 family. As to quaternary structure, part of the ribosomal stalk of the 50S ribosomal subunit. The N-terminus interacts with L11 and the large rRNA to form the base of the stalk. The C-terminus forms an elongated spine to which L12 dimers bind in a sequential fashion forming a multimeric L10(L12)X complex.

Functionally, forms part of the ribosomal stalk, playing a central role in the interaction of the ribosome with GTP-bound translation factors. This chain is Large ribosomal subunit protein uL10, found in Campylobacter jejuni subsp. jejuni serotype O:6 (strain 81116 / NCTC 11828).